A 122-amino-acid polypeptide reads, in one-letter code: Large ribosomal subunit protein uL14 (122 aa).

This sequence belongs to the universal ribosomal protein uL14 family. As to quaternary structure, part of the 50S ribosomal subunit. Forms a cluster with proteins L3 and L19. In the 70S ribosome, L14 and L19 interact and together make contacts with the 16S rRNA in bridges B5 and B8.

Binds to 23S rRNA. Forms part of two intersubunit bridges in the 70S ribosome. The chain is Large ribosomal subunit protein uL14 from Acinetobacter baylyi (strain ATCC 33305 / BD413 / ADP1).